Reading from the N-terminus, the 218-residue chain is Tubulin polymerization-promoting protein (218 aa).

The tract at residues 1–46 (MADSKAKPAKAANKTPPKSPGDPARAAKRLSLESEGANEGATAAPE) is disordered. A mediates interaction with LIMK1 region spans residues 1-115 (MADSKAKPAK…SCRTITFEQF (115 aa)). A Phosphothreonine modification is found at Thr15. Phosphoserine occurs at positions 19, 31, and 34. The residue at position 42 (Thr42) is a Phosphothreonine. The Zn(2+) site is built by His60, His71, Cys79, and Cys82. Phosphothreonine is present on Thr91. Ser106 carries the phosphoserine modification. O-linked (GlcNAc) serine glycosylation is present at Ser151. A phosphoserine mark is found at Ser158 and Ser159. The interval 166–192 (TDTSKFTGSHKERFDQSGKGKGKAGRV) is disordered. Residues 174 to 183 (SHKERFDQSG) show a composition bias toward basic and acidic residues.

Belongs to the TPPP family. As to quaternary structure, homodimer. Binds tubulin; binding is inhibited by GTP. Interacts with MAPK1. Interacts with GAPDH; the interaction is direct. Interacts with LIMK1 (via the PDZ domain); the interaction is direct. Interacts with LIMK2. Interacts with HDAC6; thereby inhibiting the tubulin deacetylase activity of HDAC6. Interacts with aggregated SNCA; may have a pro-aggregatory role in synucleinopathies. Interacts with DYNLL1. Interacts (via C-terminus) with S100A2, S100A6 and S100B; these interactions inhibit TPPP dimerization. Requires Mg(2+) as cofactor. Post-translationally, phosphorylated by LIMK1 on serine residues; phosphorylation may alter the tubulin polymerization activity. Phosphorylation by LIMK2, but not LIMK1, regulates astral microtubule organization at early stage of mitosis. Phosphorylation by ROCK1 at Ser-31, Ser-106 and Ser-158 inhibits interaction with HDAC6, resulting in decreased acetylation of tubulin, increased cell motility and entry into S-phase. Phosphorylation by CDK1 inhibits the microtubule polymerizing activity. In terms of processing, degraded by the proteasome; zinc-binding inhibits degradation by the proteasome. As to expression, widely expressed with higher expression in brain (at protein level).

It is found in the golgi outpost. Its subcellular location is the cytoplasm. It localises to the cytoskeleton. The protein localises to the microtubule organizing center. The protein resides in the nucleus. It is found in the spindle. It carries out the reaction GTP + H2O = GDP + phosphate + H(+). In terms of biological role, regulator of microtubule dynamics that plays a key role in myelination by promoting elongation of the myelin sheath. Acts as a microtubule nucleation factor in oligodendrocytes: specifically localizes to the postsynaptic Golgi apparatus region, also named Golgi outpost, and promotes microtubule nucleation, an important step for elongation of the myelin sheath. Required for both uniform polarized growth of distal microtubules as well as directing the branching of proximal processes. Shows magnesium-dependent GTPase activity; the role of the GTPase activity is unclear. In addition to microtubule nucleation activity, also involved in microtubule bundling and stabilization of existing microtubules, thereby maintaining the integrity of the microtubule network. Regulates microtubule dynamics by promoting tubulin acetylation: acts by inhibiting the tubulin deacetylase activity of HDAC6. Also regulates cell migration: phosphorylation by ROCK1 inhibits interaction with HDAC6, resulting in decreased acetylation of tubulin and increased cell motility. Plays a role in cell proliferation by regulating the G1/S-phase transition. Involved in astral microtubule organization and mitotic spindle orientation during early stage of mitosis; this process is regulated by phosphorylation by LIMK2. This Mus musculus (Mouse) protein is Tubulin polymerization-promoting protein.